The following is a 341-amino-acid chain: L-threonine 3-dehydrogenase (341 aa).

Residue cysteine 38 participates in Zn(2+) binding. Residues threonine 40 and histidine 43 each act as charge relay system in the active site. Zn(2+)-binding residues include histidine 63, glutamate 64, cysteine 93, cysteine 96, cysteine 99, and cysteine 107. NAD(+)-binding positions include isoleucine 175, aspartate 195, arginine 200, 262–264, and 286–287; these read LGI and IY.

This sequence belongs to the zinc-containing alcohol dehydrogenase family. In terms of assembly, homotetramer. The cofactor is Zn(2+).

It localises to the cytoplasm. The catalysed reaction is L-threonine + NAD(+) = (2S)-2-amino-3-oxobutanoate + NADH + H(+). It functions in the pathway amino-acid degradation; L-threonine degradation via oxydo-reductase pathway; glycine from L-threonine: step 1/2. Functionally, catalyzes the NAD(+)-dependent oxidation of L-threonine to 2-amino-3-ketobutyrate. The protein is L-threonine 3-dehydrogenase of Escherichia coli (strain K12 / MC4100 / BW2952).